The sequence spans 213 residues: Probable GTP-binding protein EngB (213 aa).

The EngB-type G domain occupies 30 to 204; that stretch reads EGFEVAFAGR…YTVLAGWMEL (175 aa). Residues 38 to 45, 64 to 68, 82 to 85, 149 to 152, and 182 to 185 each bind GTP; these read GRSNAGKS, GRTQL, DLPG, TKAD, and LFSA. Positions 45 and 66 each coordinate Mg(2+).

Belongs to the TRAFAC class TrmE-Era-EngA-EngB-Septin-like GTPase superfamily. EngB GTPase family. It depends on Mg(2+) as a cofactor.

Necessary for normal cell division and for the maintenance of normal septation. The polypeptide is Probable GTP-binding protein EngB (Pseudomonas fluorescens (strain ATCC BAA-477 / NRRL B-23932 / Pf-5)).